The primary structure comprises 93 residues: NADH-ubiquinone oxidoreductase chain 4L (93 aa).

A run of 3 helical transmembrane segments spans residues 1–21 (MVWM…VIFR), 29–49 (LFVG…VFLM), and 54–74 (LILL…ALLV).

Belongs to the complex I subunit 4L family.

It localises to the mitochondrion membrane. The catalysed reaction is a ubiquinone + NADH + 5 H(+)(in) = a ubiquinol + NAD(+) + 4 H(+)(out). In terms of biological role, core subunit of the mitochondrial membrane respiratory chain NADH dehydrogenase (Complex I) that is believed to belong to the minimal assembly required for catalysis. Complex I functions in the transfer of electrons from NADH to the respiratory chain. The immediate electron acceptor for the enzyme is believed to be ubiquinone. This chain is NADH-ubiquinone oxidoreductase chain 4L (ND4L), found in Mytilus edulis (Blue mussel).